Here is an 85-residue protein sequence, read N- to C-terminus: Large ribosomal subunit protein bL27 (85 aa).

Residues 1-20 are disordered; it reads MAHKKAGGSTRNGRDSEAKR.

This sequence belongs to the bacterial ribosomal protein bL27 family.

In Escherichia coli O139:H28 (strain E24377A / ETEC), this protein is Large ribosomal subunit protein bL27.